Here is a 351-residue protein sequence, read N- to C-terminus: Aromatic amino acid aminotransferase (351 aa).

Lys215 carries the post-translational modification N6-(pyridoxal phosphate)lysine.

It belongs to the class-II pyridoxal-phosphate-dependent aminotransferase family. Homodimer. Pyridoxal 5'-phosphate serves as cofactor.

It catalyses the reaction an aromatic L-alpha-amino acid + 2-oxoglutarate = an aromatic oxo-acid + L-glutamate. Functionally, aminotransferase that catalyzes the conversion of aromatic amino acids and 2-oxoglutarate into corresponding aromatic oxo acids and L-glutamate. This chain is Aromatic amino acid aminotransferase, found in Mycolicibacterium vanbaalenii (strain DSM 7251 / JCM 13017 / BCRC 16820 / KCTC 9966 / NRRL B-24157 / PYR-1) (Mycobacterium vanbaalenii).